Reading from the N-terminus, the 176-residue chain is RNA pyrophosphohydrolase (176 aa).

The Nudix hydrolase domain occupies 6–149 (GYRPNVGIVI…KRDVYRRVMK (144 aa)). The short motif at 38 to 59 (GGINPGESAEQAMYRELFEEVG) is the Nudix box element.

It belongs to the Nudix hydrolase family. RppH subfamily. The cofactor is a divalent metal cation.

In terms of biological role, accelerates the degradation of transcripts by removing pyrophosphate from the 5'-end of triphosphorylated RNA, leading to a more labile monophosphorylated state that can stimulate subsequent ribonuclease cleavage. The protein is RNA pyrophosphohydrolase of Shigella boydii serotype 18 (strain CDC 3083-94 / BS512).